A 238-amino-acid chain; its full sequence is Tritrans,polycis-undecaprenyl-diphosphate synthase (geranylgeranyl-diphosphate specific) (238 aa).

Aspartate 18 is a catalytic residue. Position 18 (aspartate 18) interacts with Mg(2+). Substrate contacts are provided by residues 19 to 22 and 64 to 66; these read GNRR and STE. Catalysis depends on asparagine 67, which acts as the Proton acceptor. Substrate contacts are provided by residues arginine 70, arginine 187, and 193-195; that span reads RLS. Glutamate 206 lines the Mg(2+) pocket.

It belongs to the UPP synthase family. In terms of assembly, homodimer. Mg(2+) serves as cofactor.

It carries out the reaction geranylgeranyl diphosphate + 7 isopentenyl diphosphate = tri-trans,hepta-cis-undecaprenyl diphosphate + 7 diphosphate. Functionally, catalyzes the sequential condensation of isopentenyl diphosphate (IPP) with geranylgeranyl diphosphate (GGPP) to yield (2Z,6Z,10Z,14Z,18Z,22Z,26Z,30E,34E,38E)-undecaprenyl diphosphate (tritrans,heptacis-UPP). It is probably the precursor of glycosyl carrier lipids. The polypeptide is Tritrans,polycis-undecaprenyl-diphosphate synthase (geranylgeranyl-diphosphate specific) (Pyrobaculum aerophilum (strain ATCC 51768 / DSM 7523 / JCM 9630 / CIP 104966 / NBRC 100827 / IM2)).